The primary structure comprises 864 residues: Bifunctional uridylyltransferase/uridylyl-removing enzyme (864 aa).

The tract at residues 1 to 328 is uridylyltransferase; that stretch reads MLFPYFPLSE…QTNEPVQVRL (328 aa). Residues 329-686 are uridylyl-removing; sequence LDKEFQCVNN…ISNRFSEGGT (358 aa). The 117-residue stretch at 446–562 folds into the HD domain; it reads VDEHIVRTLL…LHFAEAVQNN (117 aa). ACT domains lie at 687–766 and 793–864; these read EIFV…TFRA and EMEL…LEPK.

It belongs to the GlnD family. Requires Mg(2+) as cofactor.

It carries out the reaction [protein-PII]-L-tyrosine + UTP = [protein-PII]-uridylyl-L-tyrosine + diphosphate. It catalyses the reaction [protein-PII]-uridylyl-L-tyrosine + H2O = [protein-PII]-L-tyrosine + UMP + H(+). With respect to regulation, uridylyltransferase (UTase) activity is inhibited by glutamine, while glutamine activates uridylyl-removing (UR) activity. Its function is as follows. Modifies, by uridylylation and deuridylylation, the PII regulatory proteins (GlnB and homologs), in response to the nitrogen status of the cell that GlnD senses through the glutamine level. Under low glutamine levels, catalyzes the conversion of the PII proteins and UTP to PII-UMP and PPi, while under higher glutamine levels, GlnD hydrolyzes PII-UMP to PII and UMP (deuridylylation). Thus, controls uridylylation state and activity of the PII proteins, and plays an important role in the regulation of nitrogen assimilation and metabolism. This chain is Bifunctional uridylyltransferase/uridylyl-removing enzyme, found in Pasteurella multocida (strain Pm70).